The following is a 727-amino-acid chain: Fatty acid oxidation complex subunit alpha (727 aa).

Residues 1-200 (MNDQQPFSAI…RQGLVDEAVP (200 aa)) are enoyl-CoA hydratase. A 3-hydroxyacyl-CoA dehydrogenase region spans residues 316 to 727 (KPIHYVGILG…PPTDEDDSAS (412 aa)).

The protein in the N-terminal section; belongs to the enoyl-CoA hydratase/isomerase family. It in the central section; belongs to the 3-hydroxyacyl-CoA dehydrogenase family. As to quaternary structure, heterotetramer of two alpha chains (FadJ) and two beta chains (FadI).

The protein localises to the cytoplasm. It carries out the reaction a (3S)-3-hydroxyacyl-CoA = a (2E)-enoyl-CoA + H2O. The catalysed reaction is a 4-saturated-(3S)-3-hydroxyacyl-CoA = a (3E)-enoyl-CoA + H2O. The enzyme catalyses a (3S)-3-hydroxyacyl-CoA + NAD(+) = a 3-oxoacyl-CoA + NADH + H(+). It catalyses the reaction (3S)-3-hydroxybutanoyl-CoA = (3R)-3-hydroxybutanoyl-CoA. Its pathway is lipid metabolism; fatty acid beta-oxidation. Catalyzes the formation of a hydroxyacyl-CoA by addition of water on enoyl-CoA. Also exhibits 3-hydroxyacyl-CoA epimerase and 3-hydroxyacyl-CoA dehydrogenase activities. The protein is Fatty acid oxidation complex subunit alpha of Pectobacterium carotovorum subsp. carotovorum (strain PC1).